A 194-amino-acid chain; its full sequence is ATP synthase subunit b 1 (194 aa).

The chain crosses the membrane as a helical span at residues 1–21 (MLLGTVVTVLSTLPAIAYAMD).

The protein belongs to the ATPase B chain family. F-type ATPases have 2 components, F(1) - the catalytic core - and F(0) - the membrane proton channel. F(1) has five subunits: alpha(3), beta(3), gamma(1), delta(1), epsilon(1). F(0) has three main subunits: a(1), b(2) and c(10-14). The alpha and beta chains form an alternating ring which encloses part of the gamma chain. F(1) is attached to F(0) by a central stalk formed by the gamma and epsilon chains, while a peripheral stalk is formed by the delta and b chains.

Its subcellular location is the cell inner membrane. In terms of biological role, f(1)F(0) ATP synthase produces ATP from ADP in the presence of a proton or sodium gradient. F-type ATPases consist of two structural domains, F(1) containing the extramembraneous catalytic core and F(0) containing the membrane proton channel, linked together by a central stalk and a peripheral stalk. During catalysis, ATP synthesis in the catalytic domain of F(1) is coupled via a rotary mechanism of the central stalk subunits to proton translocation. Functionally, component of the F(0) channel, it forms part of the peripheral stalk, linking F(1) to F(0). This is ATP synthase subunit b 1 from Granulibacter bethesdensis (strain ATCC BAA-1260 / CGDNIH1).